Here is a 254-residue protein sequence, read N- to C-terminus: MKDIIIASFYKFIPLNDFESLREPILTKMHEIGIKGTIILAHEGVNGGFAGNREQMNVFYDYLRSDSRFADLHFKETYDNKNPFDKAKVKLRKEIVTMGVQKVDPSYNTGTYLSPEEWHQFIQDPNVILLDTRNDYEYELGTFKNAINPDIENFREFPDYVQRNLIDKKDKKIAMFCTGGIRCEKTTAYMKEQGFQHVYQLHDGILNYLESIPESESLWEGKCFVFDDRVAVDQKLDRVYPQLPQDYKYEREQK.

Positions 123-217 (QDPNVILLDT…YLESIPESES (95 aa)) constitute a Rhodanese domain. The active-site Cysteine persulfide intermediate is the C177.

The protein belongs to the TrhO family.

The catalysed reaction is uridine(34) in tRNA + AH2 + O2 = 5-hydroxyuridine(34) in tRNA + A + H2O. Catalyzes oxygen-dependent 5-hydroxyuridine (ho5U) modification at position 34 in tRNAs. In Legionella pneumophila (strain Paris), this protein is tRNA uridine(34) hydroxylase.